We begin with the raw amino-acid sequence, 546 residues long: MANPQQPLLIKTHKQNPIISFKILSFVITLFVALFLVAPYQVEIKHSNLCKTAQDSQLCLSYVSDLISNEIVTTESDGHSILMKFLVNYVHQMNNAIPVVRKMKNQINDIRQHGALTDCLELLDQSVDFASDSIAAIDKRSRSEHANAQSWLSGVLTNHVTCLDELDSFTKAMINGTNLEELISRAKVALAMLASLTTQDEDVFMTVLGKMPSWVSSMDRKLMESSGKDIIANAVVAQDGTGDYQTLAEAVAAAPDKSKTRYVIYVKRGTYKENVEVASNKMNLMIVGDGMYATTITGSLNVVDGSTTFRSATLAAVGQGFILQDICIQNTAGPAKDQAVALRVGADMSVINRCRIDAYQDTLYAHSQRQFYRDSYVTGTVDFIFGNAAVVFQKCQLVARKPGKYQQNMVTAQGRTDPNQATGTSIQFCNIIASSDLEPVLKEFPTYLGRPWKEYSRTVVMESYLGGLINPAGWAEWDGDFALKTLYYGEFMNNGPGAGTSKRVKWPGYHVITDPAKAMPFTVAKLIQGGSWLRSTGVAYVDGLYD.

An N-terminal signal peptide occupies residues 1–39; that stretch reads MANPQQPLLIKTHKQNPIISFKILSFVITLFVALFLVAP. The propeptide occupies 40–229; it reads YQVEIKHSNL…RKLMESSGKD (190 aa). Substrate contacts are provided by Thr-308 and Gln-338. Cysteines 327 and 354 form a disulfide. Asp-361 acts as the Proton donor in catalysis. The active-site Nucleophile is the Asp-382. Cys-395 and Cys-429 are joined by a disulfide. Residues Arg-450 and Trp-452 each contribute to the substrate site.

It in the N-terminal section; belongs to the PMEI family. The protein in the C-terminal section; belongs to the pectinesterase family.

The protein localises to the secreted. It is found in the cell wall. The enzyme catalyses [(1-&gt;4)-alpha-D-galacturonosyl methyl ester](n) + n H2O = [(1-&gt;4)-alpha-D-galacturonosyl](n) + n methanol + n H(+). The protein operates within glycan metabolism; pectin degradation; 2-dehydro-3-deoxy-D-gluconate from pectin: step 1/5. Pectinesterase may play a role in cell wall metabolism during fruit growth and development prior to ripening and may be required for preparing cell walls for softening by polygalacturonase during fruit ripening. This is Pectinesterase 1 (PME1.9) from Solanum lycopersicum (Tomato).